The primary structure comprises 445 residues: Histidinol dehydrogenase (445 aa).

3 residues coordinate NAD(+): Y138, Q199, and N222. 3 residues coordinate substrate: S245, Q267, and H270. Q267 and H270 together coordinate Zn(2+). Active-site proton acceptor residues include E335 and H336. 4 residues coordinate substrate: H336, D369, E423, and H428. Position 369 (D369) interacts with Zn(2+). H428 is a binding site for Zn(2+).

The protein belongs to the histidinol dehydrogenase family. The cofactor is Zn(2+).

It carries out the reaction L-histidinol + 2 NAD(+) + H2O = L-histidine + 2 NADH + 3 H(+). It participates in amino-acid biosynthesis; L-histidine biosynthesis; L-histidine from 5-phospho-alpha-D-ribose 1-diphosphate: step 9/9. Catalyzes the sequential NAD-dependent oxidations of L-histidinol to L-histidinaldehyde and then to L-histidine. In Burkholderia pseudomallei (strain 1710b), this protein is Histidinol dehydrogenase.